Consider the following 80-residue polypeptide: Large ribosomal subunit protein uL24 (80 aa).

The disordered stretch occupies residues 53–80 (HMKPTQSHPQGSIIEREFPIHASNVKKS).

This sequence belongs to the universal ribosomal protein uL24 family. Part of the 50S ribosomal subunit.

One of two assembly initiator proteins, it binds directly to the 5'-end of the 23S rRNA, where it nucleates assembly of the 50S subunit. In terms of biological role, one of the proteins that surrounds the polypeptide exit tunnel on the outside of the subunit. The polypeptide is Large ribosomal subunit protein uL24 (Chlorobium limicola (strain DSM 245 / NBRC 103803 / 6330)).